We begin with the raw amino-acid sequence, 142 residues long: Large ribosomal subunit protein uL11 (142 aa).

The protein belongs to the universal ribosomal protein uL11 family. As to quaternary structure, part of the ribosomal stalk of the 50S ribosomal subunit. Interacts with L10 and the large rRNA to form the base of the stalk. L10 forms an elongated spine to which L12 dimers bind in a sequential fashion forming a multimeric L10(L12)X complex. One or more lysine residues are methylated.

Forms part of the ribosomal stalk which helps the ribosome interact with GTP-bound translation factors. In Haemophilus influenzae (strain PittGG), this protein is Large ribosomal subunit protein uL11.